Reading from the N-terminus, the 527-residue chain is Sensory neuron membrane protein 1 (527 aa).

Over 1-10 (MQLQKPLKIG) the chain is Cytoplasmic. A helical transmembrane segment spans residues 11–31 (LGMMGAGLFGIIFGWVLFPVI). Residues 32–456 (LKSQLKKEMA…LKNQLFIPKR (425 aa)) lie on the Extracellular side of the membrane. N-linked (GlcNAc...) asparagine glycans are attached at residues N67 and N229. 3 cysteine pairs are disulfide-bonded: C268–C333, C297–C352, and C335–C341. Residue N440 is glycosylated (N-linked (GlcNAc...) asparagine). A helical membrane pass occupies residues 457–477 (IVSVVKWLLAGVGFVGLVGSL). At 478-527 (VYQFKGKMINFALSPSSAQVTKVNPEINQQNQPKDISIIGESQNPPKVDM) the chain is on the cytoplasmic side.

The protein belongs to the CD36 family. As to expression, detected in both male and female antennal tissues. Expression is two to three fold higher in male compared to female antenna.

The protein localises to the cell membrane. Functionally, plays an olfactory role that is not restricted to pheromone sensitivity. The protein is Sensory neuron membrane protein 1 of Ostrinia furnacalis (Asian corn borer).